Reading from the N-terminus, the 303-residue chain is Caspase-7 (303 aa).

Position 1 is an N-acetylmethionine (M1). A propeptide spanning residues 1-23 (MTDDQDCAAELEKVDSSSEDGVD) is cleaved from the precursor. Residues 1-26 (MTDDQDCAAELEKVDSSSEDGVDAKP) are disordered. A compositionally biased stretch (basic and acidic residues) spans 10-26 (ELEKVDSSSEDGVDAKP). The residue at position 30 (S30) is a Phosphoserine. Residues 38-41 (KKKR) are exosite. Residues 76–87 (KNFDKATGMDVR) form a loop L1 region. Residue H144 is part of the active site. T173 carries the post-translational modification Phosphothreonine. Residue C186 is part of the active site. The segment at 187–196 (RGTELDDGIQ) is loop L2. The propeptide occupies 199 to 206 (SGPINDID). A loop L3 region spans residues 226-238 (VPGYYSWRNPGKG). S239 is modified (phosphoserine). Positions 274 to 288 (ESQSDDPRFNEKKQI) are loop L4.

Belongs to the peptidase C14A family. In terms of assembly, heterotetramer that consists of two anti-parallel arranged heterodimers, each one formed by a 20 kDa (p20) and a 11 kDa (p11) subunit. Interacts with XIAP (via its second BIR domain); inhibiting CASP7 activity. Interacts with BIRC6/bruce. Interacts with ATXN3 (short isoform 1). Interacts with HSPA5. In terms of processing, cleavage by different proteases, such as granzyme B (GZMB), caspase-1 (CASP1), caspase-8 (CASP8) or caspase-9 (CASP9) generate the two active subunits. Its involvement in different programmed cell death processes is probably specified by the protease that activates CASP7. Cleaved and activated by initiator caspases (CASP8 and/or CASP9), leading to execution phase of apoptosis. Cleavage and maturation by GZMB regulates granzyme-mediated programmed cell death. Cleaved and activated by CASP1 in response to bacterial infection. Propeptide domains can also be cleaved efficiently by CASP3. Active heterodimers between the small subunit of caspase-7 and the large subunit of CASP3, and vice versa, also occur. Also cleaved at the N-terminus at alternative sites by CAPN1, leading to its activation. Post-translationally, phosphorylation at Ser-30 and Ser-239 by PAK2 inhibits its activity. Phosphorylation at Ser-30 prevents cleavage and activation by initiator caspase CASP9, while phosphorylation at Ser-239 prevents thiol protease activity by preventing substrate-binding. Ubiquitinated by BIRC6; this activity is inhibited by DIABLO/SMAC. As to expression, highly expressed in heart, lung, liver and kidney. Low levels in spleen, skeletal muscle and testis. No expression in the brain.

The protein localises to the cytoplasm. It is found in the cytosol. It localises to the nucleus. Its subcellular location is the secreted. The protein resides in the extracellular space. The catalysed reaction is Strict requirement for an Asp residue at position P1 and has a preferred cleavage sequence of Asp-Glu-Val-Asp-|-.. During activation, the N-terminal disordered prodomain is removed by cleavage. Concomitantly, double cleavage gives rise to a large Caspase-7 subunit p20 and a small Caspase-7 subunit p11. The two large and two small subunits then assemble to form the active CASP7 complex. Can be cleaved and activated by different caspases, depending on the context. Cleaved and activated by initiator caspases (CASP8 and/or CASP9), leading to execution phase of apoptosis. Cleavage and maturation by GZMB regulates granzyme-mediated programmed cell death. Cleavage and maturation by CASP1 regulates pyroptosis. Inhibited by XIAP, which directly binds to the active site pocket and obstructs substrate entry. Phosphorylation at Ser-30 and Ser-239 by PAK2 inhibits its activity. Inhibited by BIRC6; following inhibition of BIRC6-caspase binding by DIABLO/SMAC, BIRC6 is subjected to caspase cleavage, leading to an increase in active caspases. Thiol protease involved in different programmed cell death processes, such as apoptosis, pyroptosis or granzyme-mediated programmed cell death, by proteolytically cleaving target proteins. Has a marked preference for Asp-Glu-Val-Asp (DEVD) consensus sequences, with some plasticity for alternate non-canonical sequences. Its involvement in the different programmed cell death processes is probably determined by upstream proteases that activate CASP7. Acts as an effector caspase involved in the execution phase of apoptosis: following cleavage and activation by initiator caspases (CASP8 and/or CASP9), mediates execution of apoptosis by catalyzing cleavage of proteins, such as CLSPN, PARP1, PTGES3 and YY1. Compared to CASP3, acts as a minor executioner caspase and cleaves a limited set of target proteins. Acts as a key regulator of the inflammatory response in response to bacterial infection by catalyzing cleavage and activation of the sphingomyelin phosphodiesterase SMPD1 in the extracellular milieu, thereby promoting membrane repair. Regulates pyroptosis in intestinal epithelial cells: cleaved and activated by CASP1 in response to S.typhimurium infection, promoting its secretion to the extracellular milieu, where it catalyzes activation of SMPD1, generating ceramides that repair membranes and counteract the action of gasdermin-D (GSDMD) pores. Regulates granzyme-mediated programmed cell death in hepatocytes: cleaved and activated by granzyme B (GZMB) in response to bacterial infection, promoting its secretion to the extracellular milieu, where it catalyzes activation of SMPD1, generating ceramides that repair membranes and counteract the action of perforin (PRF1) pores. Following cleavage by CASP1 in response to inflammasome activation, catalyzes processing and inactivation of PARP1, alleviating the transcription repressor activity of PARP1. Acts as an inhibitor of type I interferon production during virus-induced apoptosis by mediating cleavage of antiviral proteins CGAS, IRF3 and MAVS, thereby preventing cytokine overproduction. Cleaves and activates sterol regulatory element binding proteins (SREBPs). Cleaves phospholipid scramblase proteins XKR4, XKR8 and XKR9. Cleaves BIRC6 following inhibition of BIRC6-caspase binding by DIABLO/SMAC. This is Caspase-7 from Mus musculus (Mouse).